The sequence spans 552 residues: Cycloheximide resistance protein (552 aa).

A disordered region spans residues 46-70 (VLNSSDKSQSSENKEQTEGDQATIQ). Residues 47 to 56 (LNSSDKSQSS) are compositionally biased toward polar residues. A run of 12 helical transmembrane segments spans residues 100 to 120 (AIAAMQIGFLTVSVYMASAIY), 137 to 157 (LATLPLTMFVIGYGIGPLFWS), 168 to 188 (TPLYIITLFIFFILQIPTALS), 194 to 213 (LSVLRVIAGFFAAPALSTGG), 225 to 246 (YSIALGVWSIFAVAGPSIGPLI), 262 to 282 (WSFWFMAILSGVCFIVLSFSL), 346 to 362 (IYIALVYSIMYLIFESV), 381 to 399 (YVSTIIGIIIGGAIYLPTV), 419 to 439 (LPPAIFGAICMPIGVFIFGWT), 445 to 464 (NWFVPLIGMALFAVGAFIIF), 477 to 494 (VEYLASVFSSNAFFRSVS), and 518 to 539 (WGSSILGFISLGMIAIPVFFYL).

The protein belongs to the major facilitator superfamily. CAR1 family.

Its subcellular location is the membrane. In terms of biological role, probable transporter. Confers resistance to cycloheximide. The chain is Cycloheximide resistance protein (CYHR) from Candida maltosa (Yeast).